A 447-amino-acid chain; its full sequence is SPARC-related modular calcium-binding protein 2 (447 aa).

An N-terminal signal peptide occupies residues 1–21 (MLPPQLCWLPLLAALLPPVPA). The Kazal-like domain occupies 34-86 (QDKDRDCSLDCPSSPQKPLCASDGRTFLSRCEFQRAKCKDPQLEIAHRGNCKD). 6 disulfide bridges follow: cysteine 40–cysteine 71, cysteine 44–cysteine 64, cysteine 53–cysteine 84, cysteine 90–cysteine 113, cysteine 124–cysteine 131, and cysteine 133–cysteine 153. Residues 87-153 (VSRCVAERKY…TAVAHKTPRC (67 aa)) enclose the Thyroglobulin type-1 1 domain. A disordered region spans residues 147 to 230 (AHKTPRCPGS…QSALEEAKQP (84 aa)). Basic and acidic residues predominate over residues 161–172 (VPQREGAGKADD). Asparagine 206 carries an N-linked (GlcNAc...) asparagine glycan. A compositionally biased stretch (polar residues) spans 206-216 (NKTNKNSASSC). Residues 213–281 (ASSCDQEHQS…TSTRYEQPKC (69 aa)) form the Thyroglobulin type-1 2 domain. 3 disulfide bridges follow: cysteine 216-cysteine 240, cysteine 251-cysteine 258, and cysteine 260-cysteine 281. Residues 217–230 (DQEHQSALEEAKQP) show a composition bias toward basic and acidic residues. 2 consecutive EF-hand domains span residues 347–382 (LEER…LRKK) and 384–419 (KPKK…TREE). Ca(2+) contacts are provided by aspartate 360, asparagine 362, serine 364, aspartate 366, glutamate 371, aspartate 397, asparagine 399, aspartate 401, serine 403, and glutamate 408. An N-linked (GlcNAc...) asparagine glycan is attached at asparagine 362. Residues 416-447 (TREEGKANTRKRHTPRGNAESSSSNRQPRKQG) are disordered.

Binds various proteins from the extracellular matrix. N-glycosylated. As to expression, strongly expressed in ovary, followed by heart, muscle, spleen, brain, thymus, lung, liver, kidney, spleen, testis, ovary and skeletal muscle.

It is found in the secreted. The protein resides in the extracellular space. Its subcellular location is the extracellular matrix. The protein localises to the basement membrane. Can stimulate endothelial cell proliferation, migration, as well as angiogenesis. Promotes matrix assembly and cell adhesiveness. This Mus musculus (Mouse) protein is SPARC-related modular calcium-binding protein 2 (Smoc2).